The chain runs to 540 residues: Glucose-6-phosphate isomerase (540 aa).

The active-site Proton donor is Glu-350. Residues His-381 and Lys-503 contribute to the active site.

It belongs to the GPI family.

The protein resides in the cytoplasm. The catalysed reaction is alpha-D-glucose 6-phosphate = beta-D-fructose 6-phosphate. Its pathway is carbohydrate biosynthesis; gluconeogenesis. It participates in carbohydrate degradation; glycolysis; D-glyceraldehyde 3-phosphate and glycerone phosphate from D-glucose: step 2/4. Catalyzes the reversible isomerization of glucose-6-phosphate to fructose-6-phosphate. This Burkholderia orbicola (strain MC0-3) protein is Glucose-6-phosphate isomerase.